We begin with the raw amino-acid sequence, 525 residues long: GMP synthase [glutamine-hydrolyzing] (525 aa).

One can recognise a Glutamine amidotransferase type-1 domain in the interval 8-207 (KILILDFGSQ…ALDICGCAAN (200 aa)). C85 acts as the Nucleophile in catalysis. Residues H181 and E183 contribute to the active site. Positions 208-400 (WKPSSIIEDA…LGLPYNMLYR (193 aa)) constitute a GMPS ATP-PPase domain. 235 to 241 (SGGVDSS) contacts ATP.

In terms of assembly, homodimer.

It catalyses the reaction XMP + L-glutamine + ATP + H2O = GMP + L-glutamate + AMP + diphosphate + 2 H(+). It functions in the pathway purine metabolism; GMP biosynthesis; GMP from XMP (L-Gln route): step 1/1. Functionally, catalyzes the synthesis of GMP from XMP. This chain is GMP synthase [glutamine-hydrolyzing], found in Shewanella sp. (strain MR-7).